A 439-amino-acid chain; its full sequence is CBL-interacting serine/threonine-protein kinase 20 (439 aa).

The Protein kinase domain occupies 12–266; that stretch reads YELGRLLGQG…IEKIMENSWF (255 aa). ATP contacts are provided by residues 18 to 26 and lysine 41; that span reads LGQGTFAKV. Aspartate 134 functions as the Proton acceptor in the catalytic mechanism. The segment at 152–181 is activation loop; sequence DFGLSALRESKQQDGLLHTTCGTPAYVAPE. A Phosphoserine modification is found at serine 156. Residue threonine 170 is modified to Phosphothreonine. The NAF domain occupies 297–322; it reads VKPMSYNAFDLISSLSQGFDLSGLFE. The interval 326–356 is PPI; sequence RSESKFTTKKDAKEIVSKFEEIATSSERFNL.

The protein belongs to the protein kinase superfamily. CAMK Ser/Thr protein kinase family. SNF1 subfamily. Requires Mn(2+) as cofactor. In terms of processing, autophosphorylated. Confined to mature leaves.

It catalyses the reaction L-seryl-[protein] + ATP = O-phospho-L-seryl-[protein] + ADP + H(+). The enzyme catalyses L-threonyl-[protein] + ATP = O-phospho-L-threonyl-[protein] + ADP + H(+). Functionally, CIPK serine-threonine protein kinases interact with CBL proteins. Binding of a CBL protein to the regulatory NAF domain of CIPK protein lead to the activation of the kinase in a calcium-dependent manner. Required for the abscisic acid-mediated (ABA) signaling pathway involved in seed germination and growth elongation inhibition. In Arabidopsis thaliana (Mouse-ear cress), this protein is CBL-interacting serine/threonine-protein kinase 20 (CIPK20).